A 192-amino-acid polypeptide reads, in one-letter code: Cytochrome c oxidase assembly protein CtaG (192 aa).

Topologically, residues 1-9 are cytoplasmic; sequence MSLSPHQKT. The chain crosses the membrane as a helical; Signal-anchor for type II membrane protein span at residues 10-30; sequence AGWLVGVVVVMGAASFAAVPF. Over 31–192 the chain is Periplasmic; that stretch reads YDWFCRVTGF…AARPAGIDVN (162 aa).

This sequence belongs to the COX11/CtaG family.

It localises to the cell inner membrane. In terms of biological role, exerts its effect at some terminal stage of cytochrome c oxidase synthesis, probably by being involved in the insertion of the copper B into subunit I. This Cereibacter sphaeroides (strain ATCC 17025 / ATH 2.4.3) (Rhodobacter sphaeroides) protein is Cytochrome c oxidase assembly protein CtaG.